A 283-amino-acid chain; its full sequence is Elongation factor Ts (283 aa).

An involved in Mg(2+) ion dislocation from EF-Tu region spans residues 80–83; the sequence is TDFV.

It belongs to the EF-Ts family.

It localises to the cytoplasm. In terms of biological role, associates with the EF-Tu.GDP complex and induces the exchange of GDP to GTP. It remains bound to the aminoacyl-tRNA.EF-Tu.GTP complex up to the GTP hydrolysis stage on the ribosome. The sequence is that of Elongation factor Ts from Actinobacillus pleuropneumoniae serotype 5b (strain L20).